Here is a 123-residue protein sequence, read N- to C-terminus: Small ribosomal subunit protein uS12 (123 aa).

D89 is subject to 3-methylthioaspartic acid. The tract at residues 101 to 123 (TLDTQGVKDRRQRRSKYGAKRPK) is disordered. Basic residues predominate over residues 110 to 123 (RRQRRSKYGAKRPK).

It belongs to the universal ribosomal protein uS12 family. In terms of assembly, part of the 30S ribosomal subunit. Contacts proteins S8 and S17. May interact with IF1 in the 30S initiation complex.

Functionally, with S4 and S5 plays an important role in translational accuracy. In terms of biological role, interacts with and stabilizes bases of the 16S rRNA that are involved in tRNA selection in the A site and with the mRNA backbone. Located at the interface of the 30S and 50S subunits, it traverses the body of the 30S subunit contacting proteins on the other side and probably holding the rRNA structure together. The combined cluster of proteins S8, S12 and S17 appears to hold together the shoulder and platform of the 30S subunit. This Paramagnetospirillum magneticum (strain ATCC 700264 / AMB-1) (Magnetospirillum magneticum) protein is Small ribosomal subunit protein uS12.